Here is a 383-residue protein sequence, read N- to C-terminus: Succinyl-diaminopimelate desuccinylase (383 aa).

Residue His79 participates in Zn(2+) binding. The active site involves Asp81. Asp110 contacts Zn(2+). The active-site Proton acceptor is Glu141. Residues Glu142, Glu170, and His355 each coordinate Zn(2+).

The protein belongs to the peptidase M20A family. DapE subfamily. As to quaternary structure, homodimer. Zn(2+) is required as a cofactor. Co(2+) serves as cofactor.

It catalyses the reaction N-succinyl-(2S,6S)-2,6-diaminopimelate + H2O = (2S,6S)-2,6-diaminopimelate + succinate. It functions in the pathway amino-acid biosynthesis; L-lysine biosynthesis via DAP pathway; LL-2,6-diaminopimelate from (S)-tetrahydrodipicolinate (succinylase route): step 3/3. Functionally, catalyzes the hydrolysis of N-succinyl-L,L-diaminopimelic acid (SDAP), forming succinate and LL-2,6-diaminopimelate (DAP), an intermediate involved in the bacterial biosynthesis of lysine and meso-diaminopimelic acid, an essential component of bacterial cell walls. The chain is Succinyl-diaminopimelate desuccinylase from Helicobacter pylori (strain HPAG1).